Reading from the N-terminus, the 371-residue chain is Probable endolytic peptidoglycan transglycosylase RlpA (371 aa).

An N-terminal signal peptide occupies residues 1 to 25 (MNQRHLWTIVALSVTVLGTPAVGRT). Residues 177–191 (LVASQSQNKSSSSQQ) are compositionally biased toward low complexity. A disordered region spans residues 177-196 (LVASQSQNKSSSSQQKSERY).

Belongs to the RlpA family.

Functionally, lytic transglycosylase with a strong preference for naked glycan strands that lack stem peptides. The polypeptide is Probable endolytic peptidoglycan transglycosylase RlpA (Nostoc sp. (strain PCC 7120 / SAG 25.82 / UTEX 2576)).